The chain runs to 523 residues: MSFHKEDGVNSLCQKALHIVTELCFAGQVEWEKCSGIFPRDRGSQGGSSTDISVSLLAVVVSFCGLALLVVSLFVFWKLCWPCWKSKPVTSNITTLPQSISSAPTEVFETEEKKEIKENEKPAVKAIEPAIKISHTSPDIPAEVQTALKEHLIKHARVQRQITEPTSSTRHSSFRRHLPRQMQVSSVDFSMGTEPVLQRGETTTSIGRIKPELYKQKSVDSEGNQNEDVKICGKLNFTLQYDYENELLVVKIIKALDLPAKDFTGTSDPYVKMYLLPDRKKKFQTRVHRKTLNPLFDETFQFPVAYDQLSNRKLHFSVYDFDRFSRHDMIGEVILDNLFEVSDLSREATVWKDIHCATTESIDLGEIMFSLCYLPTAGRMTLTVIKCRNLKAMDITGSSDPYVKVSLMCEGRRLKKRKTTTKKNTLNPVYNEAIIFDIPPENVDQVSLSIAVMDYDRVGHNEVIGVCRTGLDAEGLGRDHWNEMLAYHRKPITHWHPLLELPGRATSFDSQGSCPSPKPPSTP.

Over 1 to 55 the chain is Vesicular; sequence MSFHKEDGVNSLCQKALHIVTELCFAGQVEWEKCSGIFPRDRGSQGGSSTDISVS. The interval 13 to 35 is cysteine motif; sequence CQKALHIVTELCFAGQVEWEKCS. A helical membrane pass occupies residues 56-76; it reads LLAVVVSFCGLALLVVSLFVF. At 77–523 the chain is on the cytoplasmic side; that stretch reads WKLCWPCWKS…CPSPKPPSTP (447 aa). T136 carries the phosphothreonine modification. C2 domains lie at 231–352 and 363–496; these read ICGK…TVWK and DLGE…THWH. The Ca(2+) site is built by D262, D268, D320, F321, D322, S325, D328, D394, D400, D454, and D456.

This sequence belongs to the synaptotagmin family. As to quaternary structure, homodimer; disulfide-linked via the cysteine motif. Can also form heterodimers with SYT3, SYT6, SYT7 and SYT9. Requires Ca(2+) as cofactor. Expressed only in pancreas, lung and kidney.

The protein resides in the cytoplasmic vesicle. The protein localises to the secretory vesicle membrane. Ca(2+) sensor specifically required for the Ca(2+)-dependent exocytosis of secretory vesicles containing IGF1 in neurons of the olfactory bulb. Exocytosis of IGF1 is required for sensory perception of smell. Not involved in Ca(2+)-dependent synaptic vesicle exocytosis. Acts through Ca(2+) and phospholipid binding to the C2 domain: Ca(2+) induces binding of the C2-domains to phospholipid membranes and to assembled SNARE-complexes; both actions contribute to triggering exocytosis. The protein is Synaptotagmin-10 (SYT10) of Homo sapiens (Human).